Reading from the N-terminus, the 394-residue chain is Flavohemoprotein (394 aa).

The Globin domain occupies methionine 1 to glutamate 136. Histidine 85 is a heme b binding site. Active-site charge relay system residues include tyrosine 95 and glutamate 135. A reductase region spans residues glycine 147 to leucine 394. One can recognise an FAD-binding FR-type domain in the interval arginine 150–aspartate 255. FAD-binding positions include tyrosine 188 and arginine 204–serine 207. Glycine 268–proline 273 contributes to the NADP(+) binding site. Cysteine 387–proline 390 serves as a coordination point for FAD.

Belongs to the globin family. Two-domain flavohemoproteins subfamily. The protein in the C-terminal section; belongs to the flavoprotein pyridine nucleotide cytochrome reductase family. Requires heme b as cofactor. FAD serves as cofactor.

It catalyses the reaction 2 nitric oxide + NADPH + 2 O2 = 2 nitrate + NADP(+) + H(+). It carries out the reaction 2 nitric oxide + NADH + 2 O2 = 2 nitrate + NAD(+) + H(+). Is involved in NO detoxification in an aerobic process, termed nitric oxide dioxygenase (NOD) reaction that utilizes O(2) and NAD(P)H to convert NO to nitrate, which protects the bacterium from various noxious nitrogen compounds. Therefore, plays a central role in the inducible response to nitrosative stress. The polypeptide is Flavohemoprotein (Photobacterium profundum (strain SS9)).